The primary structure comprises 187 residues: Ribosome-recycling factor (187 aa).

This sequence belongs to the RRF family.

It is found in the cytoplasm. Functionally, responsible for the release of ribosomes from messenger RNA at the termination of protein biosynthesis. May increase the efficiency of translation by recycling ribosomes from one round of translation to another. This Methylobacterium nodulans (strain LMG 21967 / CNCM I-2342 / ORS 2060) protein is Ribosome-recycling factor.